The following is a 215-amino-acid chain: Adenylyl-sulfate kinase (215 aa).

46 to 53 (GLSGAGKS) lines the ATP pocket. The active-site Phosphoserine intermediate is the serine 120.

It belongs to the APS kinase family.

It catalyses the reaction adenosine 5'-phosphosulfate + ATP = 3'-phosphoadenylyl sulfate + ADP + H(+). Its pathway is sulfur metabolism; hydrogen sulfide biosynthesis; sulfite from sulfate: step 2/3. Catalyzes the synthesis of activated sulfate. This chain is Adenylyl-sulfate kinase (cysC), found in Vibrio cholerae serotype O1 (strain ATCC 39315 / El Tor Inaba N16961).